A 218-amino-acid chain; its full sequence is Small ribosomal subunit protein mS34 (218 aa).

Residues 180-218 (KNGDTSTEEPMLNVQRIRMEPWDYPAKQEDKGRAKGTPV) are disordered. Residues 196-212 (IRMEPWDYPAKQEDKGR) are compositionally biased toward basic and acidic residues.

The protein belongs to the mitochondrion-specific ribosomal protein mS34 family. As to quaternary structure, component of the mitochondrial small ribosomal subunit (mt-SSU). Mature mammalian 55S mitochondrial ribosomes consist of a small (28S) and a large (39S) subunit. The 28S small subunit contains a 12S ribosomal RNA (12S mt-rRNA) and 30 different proteins. The 39S large subunit contains a 16S rRNA (16S mt-rRNA), a copy of mitochondrial valine transfer RNA (mt-tRNA(Val)), which plays an integral structural role, and 52 different proteins.

It localises to the mitochondrion. Its function is as follows. Required for mitochondrial translation, plays a role in maintaining the stability of the small ribosomal subunit and the 12S rRNA that are required for mitoribosome formation. The chain is Small ribosomal subunit protein mS34 (MRPS34) from Homo sapiens (Human).